A 241-amino-acid chain; its full sequence is 1-(5-phosphoribosyl)-5-[(5-phosphoribosylamino)methylideneamino] imidazole-4-carboxamide isomerase (241 aa).

Aspartate 8 (proton acceptor) is an active-site residue. Aspartate 130 acts as the Proton donor in catalysis.

It belongs to the HisA/HisF family.

The protein localises to the cytoplasm. The enzyme catalyses 1-(5-phospho-beta-D-ribosyl)-5-[(5-phospho-beta-D-ribosylamino)methylideneamino]imidazole-4-carboxamide = 5-[(5-phospho-1-deoxy-D-ribulos-1-ylimino)methylamino]-1-(5-phospho-beta-D-ribosyl)imidazole-4-carboxamide. It functions in the pathway amino-acid biosynthesis; L-histidine biosynthesis; L-histidine from 5-phospho-alpha-D-ribose 1-diphosphate: step 4/9. The sequence is that of 1-(5-phosphoribosyl)-5-[(5-phosphoribosylamino)methylideneamino] imidazole-4-carboxamide isomerase from Leptospira interrogans serogroup Icterohaemorrhagiae serovar copenhageni (strain Fiocruz L1-130).